The following is a 416-amino-acid chain: LL-diaminopimelate aminotransferase (416 aa).

Substrate is bound by residues tyrosine 15 and glycine 42. Residues tyrosine 72, 108–109 (SK), tyrosine 132, asparagine 187, tyrosine 218, and 246–248 (SFS) each bind pyridoxal 5'-phosphate. The substrate site is built by lysine 109, tyrosine 132, and asparagine 187. Lysine 249 is subject to N6-(pyridoxal phosphate)lysine. Residues arginine 257 and asparagine 292 each coordinate pyridoxal 5'-phosphate. Residues asparagine 292 and arginine 388 each contribute to the substrate site.

It belongs to the class-I pyridoxal-phosphate-dependent aminotransferase family. LL-diaminopimelate aminotransferase subfamily. Homodimer. Pyridoxal 5'-phosphate serves as cofactor.

The enzyme catalyses (2S,6S)-2,6-diaminopimelate + 2-oxoglutarate = (S)-2,3,4,5-tetrahydrodipicolinate + L-glutamate + H2O + H(+). It participates in amino-acid biosynthesis; L-lysine biosynthesis via DAP pathway; LL-2,6-diaminopimelate from (S)-tetrahydrodipicolinate (aminotransferase route): step 1/1. In terms of biological role, involved in the synthesis of meso-diaminopimelate (m-DAP or DL-DAP), required for both lysine and peptidoglycan biosynthesis. Catalyzes the direct conversion of tetrahydrodipicolinate to LL-diaminopimelate. The chain is LL-diaminopimelate aminotransferase from Synechococcus sp. (strain JA-2-3B'a(2-13)) (Cyanobacteria bacterium Yellowstone B-Prime).